The primary structure comprises 267 residues: MPTGKLRQKPPYAAIMTNSPVTPSTETQQPKRDALYARFLPQEADAPPVEWLIAEGLTDYEEALAFMEARVQATREGTASELVWLVEHPPLYTAGTSANAEDLLTPDRFPVFNTGRGGEYTYHGPGQRVAYVMLDLKRRREDVRAFVASLEQWIIETLAAFNIKGERREDRVGVWVVRPEKPRLADGSMCEDKIAAIGIRLRRWVSFHGIAINVEPDLSHYGGIVPCGISEHGVTSLVDLGLPVTMGDVDVALGKAFESVFGPRQTK.

A disordered region spans residues 1 to 30 (MPTGKLRQKPPYAAIMTNSPVTPSTETQQP). Polar residues predominate over residues 16–28 (MTNSPVTPSTETQ). Residues 77–265 (GTASELVWLV…AFESVFGPRQ (189 aa)) enclose the BPL/LPL catalytic domain. Substrate-binding positions include 116-123 (RGGEYTYH), 196-198 (AIG), and 209-211 (GIA). Cys227 (acyl-thioester intermediate) is an active-site residue.

The protein belongs to the LipB family.

Its subcellular location is the cytoplasm. It catalyses the reaction octanoyl-[ACP] + L-lysyl-[protein] = N(6)-octanoyl-L-lysyl-[protein] + holo-[ACP] + H(+). Its pathway is protein modification; protein lipoylation via endogenous pathway; protein N(6)-(lipoyl)lysine from octanoyl-[acyl-carrier-protein]: step 1/2. Its function is as follows. Catalyzes the transfer of endogenously produced octanoic acid from octanoyl-acyl-carrier-protein onto the lipoyl domains of lipoate-dependent enzymes. Lipoyl-ACP can also act as a substrate although octanoyl-ACP is likely to be the physiological substrate. This is Octanoyltransferase from Brucella abortus biovar 1 (strain 9-941).